The following is a 174-amino-acid chain: Co-chaperone protein HscB homolog (174 aa).

The region spanning 2–74 (NYFNLFNFTP…LRRAEHLLSL (73 aa)) is the J domain.

Belongs to the HscB family. As to quaternary structure, interacts with HscA and stimulates its ATPase activity.

In terms of biological role, co-chaperone involved in the maturation of iron-sulfur cluster-containing proteins. Seems to help targeting proteins to be folded toward HscA. This Shewanella denitrificans (strain OS217 / ATCC BAA-1090 / DSM 15013) protein is Co-chaperone protein HscB homolog.